The following is a 350-amino-acid chain: Cobalt-precorrin-5B C(1)-methyltransferase (350 aa).

This sequence belongs to the CbiD family.

It carries out the reaction Co-precorrin-5B + S-adenosyl-L-methionine = Co-precorrin-6A + S-adenosyl-L-homocysteine. The protein operates within cofactor biosynthesis; adenosylcobalamin biosynthesis; cob(II)yrinate a,c-diamide from sirohydrochlorin (anaerobic route): step 6/10. Its function is as follows. Catalyzes the methylation of C-1 in cobalt-precorrin-5B to form cobalt-precorrin-6A. This is Cobalt-precorrin-5B C(1)-methyltransferase from Syntrophotalea carbinolica (strain DSM 2380 / NBRC 103641 / GraBd1) (Pelobacter carbinolicus).